We begin with the raw amino-acid sequence, 372 residues long: Glutamate 5-kinase (372 aa).

Lysine 14 serves as a coordination point for ATP. Residues serine 54, aspartate 141, and asparagine 153 each contribute to the substrate site. 173–174 (TD) provides a ligand contact to ATP. Residues 280–358 (RGTLVLDAGA…DAIESLLGYS (79 aa)) enclose the PUA domain.

Belongs to the glutamate 5-kinase family.

It is found in the cytoplasm. It carries out the reaction L-glutamate + ATP = L-glutamyl 5-phosphate + ADP. It participates in amino-acid biosynthesis; L-proline biosynthesis; L-glutamate 5-semialdehyde from L-glutamate: step 1/2. Its function is as follows. Catalyzes the transfer of a phosphate group to glutamate to form L-glutamate 5-phosphate. The polypeptide is Glutamate 5-kinase (Pseudomonas putida (strain W619)).